Here is a 132-residue protein sequence, read N- to C-terminus: Glycine-rich protein 3 (132 aa).

Positions 1–20 (MRYAVLLAVVLLLGAFTAEA) are cleaved as a signal peptide.

Prismatic layer of shell (at protein level). Expressed primarily in the mantle with highest level in the mantle edge and lower level in the mantle pallium.

The protein resides in the secreted. This is Glycine-rich protein 3 from Pinctada maxima (Silver-lipped pearl oyster).